The primary structure comprises 296 residues: L-ornithine N(alpha)-acyltransferase (296 aa).

Belongs to the acetyltransferase family. OlsB subfamily.

It catalyses the reaction a (3R)-hydroxyacyl-[ACP] + L-ornithine = a lyso-ornithine lipid + holo-[ACP] + H(+). It functions in the pathway lipid metabolism. Its function is as follows. Catalyzes the first step in the biosynthesis of ornithine lipids, which are phosphorus-free membrane lipids. Catalyzes the 3-hydroxyacyl-acyl carrier protein-dependent acylation of ornithine to form lyso-ornithine lipid (LOL). This Rhizobium meliloti (strain 1021) (Ensifer meliloti) protein is L-ornithine N(alpha)-acyltransferase.